Consider the following 613-residue polypeptide: Alkyldihydroxyacetonephosphate synthase (613 aa).

One can recognise an FAD-binding PCMH-type domain in the interval 126 to 307; it reads IDRPPDAVIL…TEAVVKIERL (182 aa). FAD-binding positions include 158-164, 228-234, 241-244, and 291-297; these read PFGGGTN, DSYAYST, ARGS, and EGAFGLV. Arginine 437 serves as a coordination point for substrate. Tyrosine 498 acts as the Proton donor/acceptor in catalysis. The important for enzyme activity stretch occupies residues 534 to 536; it reads HHH. The tract at residues 572-593 is disordered; sequence NPGKLLPSPPSEKETPKATQAR. The Microbody targeting signal motif lies at 611 to 613; the sequence is AHL.

This sequence belongs to the FAD-binding oxidoreductase/transferase type 4 family. As to quaternary structure, homodimer. It depends on FAD as a cofactor.

It is found in the peroxisome. The catalysed reaction is a long chain fatty alcohol + a 1-acylglycerone 3-phosphate = a 1-O-alkylglycerone 3-phosphate + a long-chain fatty acid + H(+). It functions in the pathway glycerolipid metabolism; ether lipid biosynthesis. Functionally, catalyzes the exchange of an acyl for a long-chain alkyl group and the formation of the ether bond in the biosynthesis of ether phospholipids. This chain is Alkyldihydroxyacetonephosphate synthase, found in Trypanosoma brucei brucei.